Reading from the N-terminus, the 274-residue chain is Rhamnulose-1-phosphate aldolase (274 aa).

Residue Glu117 is part of the active site. The Zn(2+) site is built by His141, His143, and His212.

The protein belongs to the aldolase class II family. RhaD subfamily. In terms of assembly, homotetramer. Zn(2+) serves as cofactor.

It is found in the cytoplasm. It carries out the reaction L-rhamnulose 1-phosphate = (S)-lactaldehyde + dihydroxyacetone phosphate. It participates in carbohydrate degradation; L-rhamnose degradation; glycerone phosphate from L-rhamnose: step 3/3. Its function is as follows. Catalyzes the reversible cleavage of L-rhamnulose-1-phosphate to dihydroxyacetone phosphate (DHAP) and L-lactaldehyde. In Shigella dysenteriae serotype 1 (strain Sd197), this protein is Rhamnulose-1-phosphate aldolase.